The sequence spans 53 residues: UPF0391 membrane protein PputGB1_0151 (53 aa).

Helical transmembrane passes span 4–24 (WAIT…GGIA) and 29–49 (GIAK…FFFG).

This sequence belongs to the UPF0391 family.

The protein localises to the cell membrane. This is UPF0391 membrane protein PputGB1_0151 from Pseudomonas putida (strain GB-1).